Reading from the N-terminus, the 324-residue chain is NAD kinase (324 aa).

The active-site Proton acceptor is aspartate 89. NAD(+) is bound by residues 89–90 (DG), arginine 94, 163–164 (NE), aspartate 193, and 204–209 (TAYAFS).

This sequence belongs to the NAD kinase family. It depends on a divalent metal cation as a cofactor.

It localises to the cytoplasm. The enzyme catalyses NAD(+) + ATP = ADP + NADP(+) + H(+). Involved in the regulation of the intracellular balance of NAD and NADP, and is a key enzyme in the biosynthesis of NADP. Catalyzes specifically the phosphorylation on 2'-hydroxyl of the adenosine moiety of NAD to yield NADP. The sequence is that of NAD kinase from Nocardia farcinica (strain IFM 10152).